We begin with the raw amino-acid sequence, 346 residues long: N-acetyl-gamma-glutamyl-phosphate reductase (346 aa).

The active site involves cysteine 150.

Belongs to the NAGSA dehydrogenase family. Type 1 subfamily.

The protein localises to the cytoplasm. It catalyses the reaction N-acetyl-L-glutamate 5-semialdehyde + phosphate + NADP(+) = N-acetyl-L-glutamyl 5-phosphate + NADPH + H(+). Its pathway is amino-acid biosynthesis; L-arginine biosynthesis; N(2)-acetyl-L-ornithine from L-glutamate: step 3/4. In terms of biological role, catalyzes the NADPH-dependent reduction of N-acetyl-5-glutamyl phosphate to yield N-acetyl-L-glutamate 5-semialdehyde. The polypeptide is N-acetyl-gamma-glutamyl-phosphate reductase (Desulforamulus reducens (strain ATCC BAA-1160 / DSM 100696 / MI-1) (Desulfotomaculum reducens)).